Here is a 784-residue protein sequence, read N- to C-terminus: Protein DBF4 homolog B (784 aa).

Residues 27 to 117 (CREITFAGKS…SRGKQLLKKV (91 aa)) enclose the BRCT domain. Residues 222–243 (TVKKKDPGDQEEEEGQRSQKPQ) are disordered. A DBF4-type zinc finger spans residues 244-293 (ARKRKGYCECCEETFDTLSEHLVGEHHFRFVSNPLSYKMIDDLAAQLTCD). Residues C251, C254, H264, and H270 each coordinate Zn(2+). 3 disordered regions span residues 299–332 (FGSP…GNEG), 348–368 (HADC…AEEP), and 495–529 (TVGS…AQPA). A compositionally biased stretch (polar residues) spans 498-507 (SQGDVTSHSA).

As to quaternary structure, forms a complex with cdc7. Post-translationally, phosphorylated. Stably phosphorylated throughout the cell cycle.

Its subcellular location is the nucleus. Functionally, regulatory subunit for cdc7 which activates its kinase activity thereby playing a central role in DNA replication and cell proliferation. Specifically required during the initiation of DNA replication in egg and during early embryonic development. The complex cdc7-dbf4b phosphorylates mcm2 and mcm4 subunits and is required for cdc45 loading. This chain is Protein DBF4 homolog B (dbf4b), found in Xenopus laevis (African clawed frog).